The chain runs to 230 residues: Ureidoacrylate amidohydrolase RutB (230 aa).

Residue Asp-24 is the Proton acceptor of the active site. Lys-133 is an active-site residue. The Nucleophile role is filled by Cys-166.

Belongs to the isochorismatase family. RutB subfamily.

The catalysed reaction is (Z)-3-ureidoacrylate + H2O + H(+) = (Z)-3-aminoacrylate + NH4(+) + CO2. It catalyses the reaction (Z)-3-ureidoacrylate + H2O = (Z)-3-aminoacrylate + carbamate + H(+). It carries out the reaction (Z)-2-methylureidoacrylate + H2O + H(+) = (Z)-2-methylaminoacrylate + NH4(+) + CO2. In terms of biological role, hydrolyzes ureidoacrylate to form aminoacrylate and carbamate. The carbamate hydrolyzes spontaneously, thereby releasing one of the nitrogen atoms of the pyrimidine ring as ammonia and one of its carbon atoms as CO2. This is Ureidoacrylate amidohydrolase RutB from Escherichia coli O157:H7.